The following is a 208-amino-acid chain: Small ribosomal subunit protein uS4 (208 aa).

The S4 RNA-binding domain occupies 95–159; that stretch reads RRIDNIVYRA…FKKLVRSNIE (65 aa).

The protein belongs to the universal ribosomal protein uS4 family. As to quaternary structure, part of the 30S ribosomal subunit. Contacts protein S5. The interaction surface between S4 and S5 is involved in control of translational fidelity.

Its function is as follows. One of the primary rRNA binding proteins, it binds directly to 16S rRNA where it nucleates assembly of the body of the 30S subunit. With S5 and S12 plays an important role in translational accuracy. This Borrelia recurrentis (strain A1) protein is Small ribosomal subunit protein uS4.